Reading from the N-terminus, the 212-residue chain is Thylakoid membrane protein slr1949 (212 aa).

A helical transmembrane segment spans residues 109–131 (WVQDGLLLLLALGLCGISGYRLW). The stretch at 180–212 (PNRRQRKQYETRLQALRQSAAKMKAKTQKAKAL) forms a coiled coil.

The protein localises to the cellular thylakoid membrane. This is Thylakoid membrane protein slr1949 from Synechocystis sp. (strain ATCC 27184 / PCC 6803 / Kazusa).